The sequence spans 165 residues: Transcription elongation factor A protein-like 1 (165 aa).

Residues 1–101 (MENTRSENEE…EQPPCGVGKH (101 aa)) are disordered. Acidic residues predominate over residues 33 to 60 (CSEEDQSSEDLSSEEQSSEEEFFPEELL).

It belongs to the TFS-II family. TFA subfamily.

The protein localises to the nucleus. In terms of biological role, may be involved in transcriptional regulation. Modulates various viral and cellular promoters in a promoter context-dependent manner. Does not bind DNA directly. This chain is Transcription elongation factor A protein-like 1, found in Mus musculus (Mouse).